The following is a 63-amino-acid chain: Protease 2 small chain (63 aa).

One can recognise a Peptidase S8 domain in the interval 11–63; sequence QWGLSGTYGIRANTAWDNGYQGQGKIIAVVDTGITDHPDLLANRTSPLGYDFI.

Belongs to the peptidase S8 family. In terms of assembly, heterodimer of a large and a small chain.

The protein localises to the secreted. This is Protease 2 small chain from Achromobacter lyticus.